A 242-amino-acid polypeptide reads, in one-letter code: GATA zinc finger domain-containing protein 1 (242 aa).

The GATA-type zinc-finger motif lies at 9 to 33 (CAVCKTQSSSMWKKGNQGEILCNGC). The disordered stretch occupies residues 44-85 (GASASSTIQQNNGGGKQSKQEIHRRSARLRSTKYKAPASEKK). The segment covering 45–54 (ASASSTIQQN) has biased composition (low complexity).

The protein resides in the nucleus. In terms of biological role, component of some chromatin complex recruited to chromatin sites methylated 'Lys-4' of histone H3 (H3K4me), with a preference for trimethylated form (H3K4me3). In Danio rerio (Zebrafish), this protein is GATA zinc finger domain-containing protein 1 (gatad1).